A 185-amino-acid polypeptide reads, in one-letter code: MNISGTLNTLRLLYNPSLCKPSLVVPTFNDLPIPIHDSIKAVVLDKDNCIAFPHDDKIWPDYLQHWETLRSKYSNKALLIVSNTAGSNSDKDYSQAKLLEDKTGIPVLRHSTKKPGCHNEILDYFYRNKTITNPKEVAVVGDRLFTDILMANLMGSYGVWIRDGVKVSANPLSKFEKKLYNFLGF.

The Phosphoryl acceptor signature appears at Asp-45–Cys-49.

The protein belongs to the GEP4 family.

It is found in the mitochondrion inner membrane. It catalyses the reaction a 1,2-diacyl-sn-glycero-3-phospho-(1'-sn-glycero-3'-phosphate) + H2O = a 1,2-diacyl-sn-glycero-3-phospho-(1'-sn-glycerol) + phosphate. It functions in the pathway phospholipid metabolism; phosphatidylglycerol biosynthesis; phosphatidylglycerol from CDP-diacylglycerol: step 2/2. Its function is as follows. Phosphatidylglycerophosphatase involved in the biosynthesis of cardiolipin (CL), a unique dimeric phosphoglycerolipid predominantly present in mitochondrial membranes and which has important functions for cellular energy metabolism, mitochondrial dynamics and the initiation of apoptotic pathways. Required for the stability of respiratory chain supercomplexes and for growth at elevated temperature, in presence of ethidium bromide or in absence of prohibitins. This chain is Phosphatidylglycerophosphatase GEP4, mitochondrial (GEP4), found in Saccharomyces cerevisiae (strain ATCC 204508 / S288c) (Baker's yeast).